We begin with the raw amino-acid sequence, 291 residues long: Small ribosomal subunit biogenesis GTPase RsgA (291 aa).

Positions 63-221 constitute a CP-type G domain; sequence KNEIKRPPVS…IADTPGFSAL (159 aa). GTP is bound by residues 112-115 and 164-172; these read TKKD and GQSGVGKST. Residues C245, C250, H252, and C258 each coordinate Zn(2+).

This sequence belongs to the TRAFAC class YlqF/YawG GTPase family. RsgA subfamily. As to quaternary structure, monomer. Associates with 30S ribosomal subunit, binds 16S rRNA. Requires Zn(2+) as cofactor.

Its subcellular location is the cytoplasm. One of several proteins that assist in the late maturation steps of the functional core of the 30S ribosomal subunit. Helps release RbfA from mature subunits. May play a role in the assembly of ribosomal proteins into the subunit. Circularly permuted GTPase that catalyzes slow GTP hydrolysis, GTPase activity is stimulated by the 30S ribosomal subunit. This Staphylococcus saprophyticus subsp. saprophyticus (strain ATCC 15305 / DSM 20229 / NCIMB 8711 / NCTC 7292 / S-41) protein is Small ribosomal subunit biogenesis GTPase RsgA.